The sequence spans 203 residues: Small ribosomal subunit protein uS4 (203 aa).

The S4 RNA-binding domain occupies 93–154 (RRFDNVVYRC…KSRNLDAVAD (62 aa)).

This sequence belongs to the universal ribosomal protein uS4 family. As to quaternary structure, part of the 30S ribosomal subunit. Contacts protein S5. The interaction surface between S4 and S5 is involved in control of translational fidelity.

One of the primary rRNA binding proteins, it binds directly to 16S rRNA where it nucleates assembly of the body of the 30S subunit. Its function is as follows. With S5 and S12 plays an important role in translational accuracy. The chain is Small ribosomal subunit protein uS4 from Chlorobaculum parvum (strain DSM 263 / NCIMB 8327) (Chlorobium vibrioforme subsp. thiosulfatophilum).